Here is a 116-residue protein sequence, read N- to C-terminus: G antigen 2A (116 aa).

The interval 1–116 is disordered; that stretch reads MSWRGRSTYR…PEEGEKQSQC (116 aa). Acidic residues-rich tracts occupy residues 31–44 and 86–95; these read FSDE…EEGE and ECEDGPDGQE. A compositionally biased stretch (basic and acidic residues) spans 102-116; that stretch reads EEVKTPEEGEKQSQC.

This sequence belongs to the GAGE family.

The polypeptide is G antigen 2A (GAGE2A) (Homo sapiens (Human)).